A 371-amino-acid chain; its full sequence is Flagellar P-ring protein (371 aa).

Positions 1–28 (MPARPTPPAVPLALALAAALAAPAPAAA) are cleaved as a signal peptide.

This sequence belongs to the FlgI family. As to quaternary structure, the basal body constitutes a major portion of the flagellar organelle and consists of four rings (L,P,S, and M) mounted on a central rod.

It is found in the periplasm. The protein resides in the bacterial flagellum basal body. Its function is as follows. Assembles around the rod to form the L-ring and probably protects the motor/basal body from shearing forces during rotation. This Anaeromyxobacter dehalogenans (strain 2CP-C) protein is Flagellar P-ring protein.